Here is a 310-residue protein sequence, read N- to C-terminus: Fe-S cluster assembly protein dre2 (310 aa).

Disordered stretches follow at residues 1–30 (MAPS…GKRT) and 165–184 (APAP…DDND). Residues 24 to 154 (ADSGKRTLLL…KMDVGNGAAV (131 aa)) are N-terminal SAM-like domain. Residues 155-202 (PLRLGRKKKAAPAPAPVVQPPPIISSDDNDLNDDELIDEDTLLSADDL) form a linker region. A compositionally biased stretch (pro residues) spans 167–177 (APAPVVQPPPI). Residues C212, C223, C226, and C228 each coordinate [2Fe-2S] cluster. Residues 212–228 (CQPKAGKRRRACKDCTC) are fe-S binding site A. C273, C276, C284, and C287 together coordinate [4Fe-4S] cluster. 2 short sequence motifs (cx2C motif) span residues 273-276 (CGNC) and 284-287 (CDGC). The tract at residues 273–287 (CGNCALGDAFRCDGC) is fe-S binding site B.

Belongs to the anamorsin family. As to quaternary structure, monomer. Interacts with tah18. Interacts with mia40. [2Fe-2S] cluster serves as cofactor. [4Fe-4S] cluster is required as a cofactor.

It localises to the cytoplasm. The protein localises to the mitochondrion intermembrane space. In terms of biological role, component of the cytosolic iron-sulfur (Fe-S) protein assembly (CIA) machinery required for the maturation of extramitochondrial Fe-S proteins. Part of an electron transfer chain functioning in an early step of cytosolic Fe-S biogenesis, facilitating the de novo assembly of a [4Fe-4S] cluster on the scaffold complex cfd1-nbp35. Electrons are transferred to dre2 from NADPH via the FAD- and FMN-containing protein tah18. Tah18-dre2 are also required for the assembly of the diferric tyrosyl radical cofactor of ribonucleotide reductase (RNR), probably by providing electrons for reduction during radical cofactor maturation in the catalytic small subunit rnr2. The polypeptide is Fe-S cluster assembly protein dre2 (Emericella nidulans (strain FGSC A4 / ATCC 38163 / CBS 112.46 / NRRL 194 / M139) (Aspergillus nidulans)).